The primary structure comprises 51 residues: UPF0391 membrane protein Mbur_2216 (51 aa).

2 helical membrane passes run 1–21 (MADL…AYVL) and 31–51 (MTIA…TILL).

The protein belongs to the UPF0391 family.

It localises to the cell membrane. The polypeptide is UPF0391 membrane protein Mbur_2216 (Methanococcoides burtonii (strain DSM 6242 / NBRC 107633 / OCM 468 / ACE-M)).